The following is a 375-amino-acid chain: Actin, cytoplasmic (375 aa).

It belongs to the actin family.

The protein localises to the cytoplasm. It is found in the cytoskeleton. It carries out the reaction ATP + H2O = ADP + phosphate + H(+). Actins are highly conserved proteins that are involved in various types of cell motility and are ubiquitously expressed in all eukaryotic cells. This chain is Actin, cytoplasmic (MIC-ACT-1), found in Sterkiella nova (Ciliate).